Consider the following 455-residue polypeptide: Probable cytosolic iron-sulfur protein assembly protein 1 (455 aa).

WD repeat units lie at residues 31-70 (GHSS…TTSA), 90-129 (GHQR…DGSS), 163-202 (GHES…EFEC), 208-247 (EHSQ…DWFC), 253-292 (GHES…QCEA), 318-365 (YHDR…DEKS), and 380-453 (HASA…YAAT).

This sequence belongs to the WD repeat CIA1 family.

Its function is as follows. Essential component of the cytosolic iron-sulfur (Fe/S) protein assembly machinery. Required for the maturation of extramitochondrial Fe/S proteins. This Mycosarcoma maydis (Corn smut fungus) protein is Probable cytosolic iron-sulfur protein assembly protein 1.